A 937-amino-acid polypeptide reads, in one-letter code: Proprotein convertase subtilisin/kexin type 6 (937 aa).

Residues 1–16 (MPPRAPPAPGPRPPPR) show a composition bias toward pro residues. The segment at 1–22 (MPPRAPPAPGPRPPPRAAGRHG) is disordered. The signal sequence occupies residues 1–45 (MPPRAPPAPGPRPPPRAAGRHGLSPLAPRPWRWLLLLALPAVCSA). Positions 46-132 (LPPPRPVYTN…QQEVKRRVKR (87 aa)) are excised as a propeptide. The Peptidase S8 domain occupies 149 to 468 (MWYMHCADKN…FGLVDAEALV (320 aa)). Active-site charge relay system residues include D186 and H227. N-linked (GlcNAc...) asparagine glycosylation occurs at N240. Residue S401 is the Charge relay system of the active site. Residues 476–616 (AVPSQHMCVA…SLILYGTAEH (141 aa)) form the P/Homo B domain. The Cell attachment site motif lies at 534–536 (RGD). The segment at 621–656 (FSSHQSRSRMLELSVPEQEPLKAEGPPPQAETPEEE) is disordered. FU repeat units lie at residues 660–707 (TGVC…GYFG), 711–758 (ARRC…GLYA), 762–806 (QRLC…GTYF), 810–855 (LIRC…GFYP), and 863–911 (HKVC…ETFC). Positions 680–898 (CLNCVHFSLG…GFTQLGTSCI (219 aa)) are CRM (Cys-rich motif). N-linked (GlcNAc...) asparagine glycosylation is found at N882 and N900. The PLAC domain occupies 899–937 (TNHTCSNADETFCEMVKSNRLCERKLFIQFCCRTCLLAG).

The protein belongs to the peptidase S8 family. In terms of assembly, the precursor protein seems to exist in the reticulum endoplasmic as both a monomer and a dimer-sized complex whereas mature form exists only as a monomer, suggesting that propeptide cleavage affects its tertiary or quaternary structure. Interacts (immature form including the propeptide) with RCN3; probably involved in the maturation and the secretion of PCSK6. It depends on Ca(2+) as a cofactor. In terms of tissue distribution, high expression in the anterior pituitary and in several brain regions, the atrium, and the ventricle.

Functionally, serine endoprotease that processes various proproteins by cleavage at paired basic amino acids, recognizing the RXXX[KR]R consensus motif. Likely functions in the constitutive secretory pathway, with unique restricted distribution in both neuroendocrine and non-neuroendocrine tissues. The protein is Proprotein convertase subtilisin/kexin type 6 (Pcsk6) of Rattus norvegicus (Rat).